The following is an 82-amino-acid chain: Cell division topological specificity factor (82 aa).

It belongs to the MinE family.

In terms of biological role, prevents the cell division inhibition by proteins MinC and MinD at internal division sites while permitting inhibition at polar sites. This ensures cell division at the proper site by restricting the formation of a division septum at the midpoint of the long axis of the cell. In Buchnera aphidicola subsp. Cinara cedri (strain Cc), this protein is Cell division topological specificity factor.